Here is a 64-residue protein sequence, read N- to C-terminus: Long neurotoxin MS4 (64 aa).

5 cysteine pairs are disulfide-bonded: C3/C24, C6/C11, C17/C41, C45/C57, and C58/C63.

It belongs to the three-finger toxin family. Ancestral subfamily. As to expression, expressed by the venom gland.

The protein localises to the secreted. In terms of biological role, produces peripheral paralysis by blocking neuromuscular transmission at the postsynaptic site. Weak inhibitor of the endogenous nicotinic acetylcholine receptors (nAChR) in the human rhabdomyosarcoma TE 671 cell line with an IC(50) of 690 mM. This neurotoxin is lethal to zebrafish by injection at the back of the dorsolateral region, but is not toxic to mice by intraperitoneal injection. The protein is Long neurotoxin MS4 of Micrurus surinamensis (Surinam coral snake).